We begin with the raw amino-acid sequence, 367 residues long: Alanine racemase (367 aa).

The active-site Proton acceptor; specific for D-alanine is K34. An N6-(pyridoxal phosphate)lysine modification is found at K34. R131 contributes to the substrate binding site. The active-site Proton acceptor; specific for L-alanine is the Y258. M306 is a substrate binding site.

The protein belongs to the alanine racemase family. It depends on pyridoxal 5'-phosphate as a cofactor.

It carries out the reaction L-alanine = D-alanine. Its pathway is amino-acid biosynthesis; D-alanine biosynthesis; D-alanine from L-alanine: step 1/1. Catalyzes the interconversion of L-alanine and D-alanine. May also act on other amino acids. This chain is Alanine racemase (alr), found in Corynebacterium efficiens (strain DSM 44549 / YS-314 / AJ 12310 / JCM 11189 / NBRC 100395).